A 229-amino-acid chain; its full sequence is Uracil-DNA glycosylase (229 aa).

The active-site Proton acceptor is the Asp64.

Belongs to the uracil-DNA glycosylase (UDG) superfamily. UNG family.

The protein localises to the cytoplasm. It catalyses the reaction Hydrolyzes single-stranded DNA or mismatched double-stranded DNA and polynucleotides, releasing free uracil.. Excises uracil residues from the DNA which can arise as a result of misincorporation of dUMP residues by DNA polymerase or due to deamination of cytosine. The polypeptide is Uracil-DNA glycosylase (Escherichia fergusonii (strain ATCC 35469 / DSM 13698 / CCUG 18766 / IAM 14443 / JCM 21226 / LMG 7866 / NBRC 102419 / NCTC 12128 / CDC 0568-73)).